The following is a 359-amino-acid chain: WAT1-related protein At4g28040 (359 aa).

The next 10 helical transmembrane spans lie at 10-30 (LALV…KAAF), 37-57 (TVFV…ISFI), 66-86 (PSLG…GVTV), 103-123 (ACAM…IVGF), 133-153 (SVAK…MTFL), 170-190 (WLLG…WLIL), 204-224 (TSAC…LALG), 240-260 (SCCI…AWIV), 266-286 (VFSA…GALY), and 292-312 (YLGS…VLWG). Positions 18–131 (TSAGVALFTK…GFESIKRRSM (114 aa)) constitute an EamA 1 domain. Residues 199–310 (PDHLYTSACT…AIILGLYIVL (112 aa)) form the EamA 2 domain.

The protein belongs to the drug/metabolite transporter (DMT) superfamily. Plant drug/metabolite exporter (P-DME) (TC 2.A.7.4) family.

It is found in the membrane. In Arabidopsis thaliana (Mouse-ear cress), this protein is WAT1-related protein At4g28040.